The sequence spans 348 residues: Protein RecA (348 aa).

67–74 (GPESSGKT) contributes to the ATP binding site.

It belongs to the RecA family.

It is found in the cytoplasm. In terms of biological role, can catalyze the hydrolysis of ATP in the presence of single-stranded DNA, the ATP-dependent uptake of single-stranded DNA by duplex DNA, and the ATP-dependent hybridization of homologous single-stranded DNAs. It interacts with LexA causing its activation and leading to its autocatalytic cleavage. This is Protein RecA from Kineococcus radiotolerans (strain ATCC BAA-149 / DSM 14245 / SRS30216).